Reading from the N-terminus, the 170-residue chain is MVSSLKDMLKYDEGEKLEMYKDTEGNYTIGIGHLITKNKDKNEAIKILEGEIGHTVKLNSKKEPEISSSESESLFEKDKSVAINSIENSSTLSTIYNNLDSNRKMALANMVFQMGASNVSKFKKSLKLIEEKKWAEAAIELKNSTWNTQTPKRSNRVISVFETGTLKEYK.

The active-site Proton donor is the glutamate 13. Catalysis depends on aspartate 22, which acts as the Nucleophile.

It belongs to the glycosyl hydrolase 24 family.

It carries out the reaction Hydrolysis of (1-&gt;4)-beta-linkages between N-acetylmuramic acid and N-acetyl-D-glucosamine residues in a peptidoglycan and between N-acetyl-D-glucosamine residues in chitodextrins.. This chain is Probable T4-type lysozyme 2, found in Dictyostelium discoideum (Social amoeba).